Consider the following 232-residue polypeptide: Large ribosomal subunit protein uL1 (232 aa).

The protein belongs to the universal ribosomal protein uL1 family. In terms of assembly, part of the 50S ribosomal subunit.

Its function is as follows. Binds directly to 23S rRNA. The L1 stalk is quite mobile in the ribosome, and is involved in E site tRNA release. In terms of biological role, protein L1 is also a translational repressor protein, it controls the translation of the L11 operon by binding to its mRNA. The chain is Large ribosomal subunit protein uL1 from Chelativorans sp. (strain BNC1).